The sequence spans 267 residues: MSNISSVAPPPPPPPMIVTPSTPATTKERPVGDNITTDECTWACEYPEVQKGCYLSRVCQYTPPKHCQYYSVNSIVQVGPTCGLVALSMLLGGSPTADDLLKDAIDQEYTLNGELFSAQYLFELTRKHMPGPAACQLHVGPLDCKKVKELLKAGGCLLVPYDADVNHAPCVKNGHRAHWALIVGYLVDTQDRFYVLARHGKSRNLAVWPLDTLSQSNENLKEFAQPKGYPDDEFLLPPGGIGGSLGLNERCILVNGLPKQVIHVRWS.

The interval 1-32 is disordered; sequence MSNISSVAPPPPPPPMIVTPSTPATTKERPVG. The span at 8-17 shows a compositional bias: pro residues; the sequence is APPPPPPPMI. The interval 74–188 is peptidase C39-like; sequence SIVQVGPTCG…WALIVGYLVD (115 aa). The active site involves C82.

The protein belongs to the ACTMAP family.

It catalyses the reaction N-terminal N(alpha)-acetyl-L-cysteinyl-L-aspartyl-[protein] + H2O = N-terminal L-aspartyl-[protein] + N-acetyl-L-cysteine. Functionally, actin maturation protease that specifically mediates the cleavage of immature acetylated N-terminal actin, thereby contributing to actin maturation. This Drosophila melanogaster (Fruit fly) protein is Actin maturation protease.